A 244-amino-acid polypeptide reads, in one-letter code: Protein DCG1 (244 aa).

This sequence belongs to the HyuE racemase family.

This Saccharomyces cerevisiae (strain ATCC 204508 / S288c) (Baker's yeast) protein is Protein DCG1 (DCG1).